The chain runs to 142 residues: Large ribosomal subunit protein bL27m (142 aa).

Residues 27 to 48 are disordered; the sequence is TKKSAGSTKNGRTSQPKNLGLK. The span at 30-43 shows a compositional bias: polar residues; it reads SAGSTKNGRTSQPK.

The protein belongs to the bacterial ribosomal protein bL27 family.

It localises to the mitochondrion. This chain is Large ribosomal subunit protein bL27m (mrpl27), found in Dictyostelium discoideum (Social amoeba).